A 49-amino-acid chain; its full sequence is uncharacterized protein (49 aa).

The signal sequence occupies residues 1 to 22; it reads MVFLLFLSFVLSSIFLVPLVYM.

Its subcellular location is the secreted. This is an uncharacterized protein from Dictyostelium discoideum (Social amoeba).